The primary structure comprises 85 residues: Translation initiation factor IF-1 (85 aa).

Positions 1–72 (MAKEELLEMR…TKARITYRFM (72 aa)) constitute an S1-like domain.

It belongs to the IF-1 family. In terms of assembly, component of the 30S ribosomal translation pre-initiation complex which assembles on the 30S ribosome in the order IF-2 and IF-3, IF-1 and N-formylmethionyl-tRNA(fMet); mRNA recruitment can occur at any time during PIC assembly.

The protein localises to the cytoplasm. Functionally, one of the essential components for the initiation of protein synthesis. Stabilizes the binding of IF-2 and IF-3 on the 30S subunit to which N-formylmethionyl-tRNA(fMet) subsequently binds. Helps modulate mRNA selection, yielding the 30S pre-initiation complex (PIC). Upon addition of the 50S ribosomal subunit IF-1, IF-2 and IF-3 are released leaving the mature 70S translation initiation complex. This chain is Translation initiation factor IF-1, found in Erythrobacter litoralis (strain HTCC2594).